A 462-amino-acid chain; its full sequence is 7-hydroxymethyl chlorophyll a reductase, chloroplastic (462 aa).

A chloroplast-targeting transit peptide spans 1 to 20 (MITVVTSRLSLLPPVFSVVN).

It belongs to the FrhB family. As to quaternary structure, interacts with SGR1, the chlorophyll catabolic enzymes (CCEs) NYC1, NOL and RCCR, and the LHCII complex. Part of a SGR1-CCE-LHCII complex, which acts in chlorophyll breakdown. It depends on FAD as a cofactor. Requires iron-sulfur cluster as cofactor.

The protein resides in the plastid. It localises to the chloroplast. It catalyses the reaction chlorophyll a + 2 oxidized [2Fe-2S]-[ferredoxin] + H2O = 7(1)-hydroxychlorophyll a + 2 reduced [2Fe-2S]-[ferredoxin] + 2 H(+). Probable iron-sulfur flavoprotein that converts 7-hydroxymethyl chlorophyll a to chlorophyll a using ferredoxin as a reducing equivalent. Catalyzes the reduction of a hydroxymethyl group to a methyl group. Belongs to the chlorophyll catabolic enzymes (CCEs). The chain is 7-hydroxymethyl chlorophyll a reductase, chloroplastic (HCAR) from Arabidopsis thaliana (Mouse-ear cress).